We begin with the raw amino-acid sequence, 825 residues long: PR domain zinc finger protein 1 (825 aa).

Residues 84–201 (PRNLLFKYAT…ANQELLVWYC (118 aa)) enclose the SET domain. Low complexity predominate over residues 324–361 (ITRSPIPSSTTPSPSARSSPDQSLKSSSPHSSPGNTVS). Positions 324-369 (ITRSPIPSSTTPSPSARSSPDQSLKSSSPHSSPGNTVSPVGPGSQE) are disordered. The interaction with PIAS1 stretch occupies residues 527 to 574 (HVVQPKATSAAMAAPSSDEAMNLIKNKRNMTGYKTLPYPLKKQNGKIK). C2H2-type zinc fingers lie at residues 575 to 597 (YECNVCAKTFGQLSNLKVHLRVH), 603 to 625 (FKCQTCNKGFTQLAHLQKHYLVH), 631 to 653 (HECQVCHKRFSSTSNLKTHLRLH), and 659 to 681 (YQCKVCPAKFTQFVHLKLHKRLH). Lys816 participates in a covalent cross-link: Glycyl lysine isopeptide (Lys-Gly) (interchain with G-Cter in SUMO1); alternate. A Glycyl lysine isopeptide (Lys-Gly) (interchain with G-Cter in SUMO2); alternate cross-link involves residue Lys816.

The protein belongs to the class V-like SAM-binding methyltransferase superfamily. As to quaternary structure, interacts with PRMT5. Interacts with FBXO10. Interacts with FBXO11. Interacts with multiple nuclear sumoylation E3 ligases, including CBX4, PIAS1, PIAS2, PIAS3, PIAS4, PML and RNF4, but not RANBP2. Interacts with LDB1, SMARCD3 and SMARCC1. Interacts with EEIG1; following TNFSF11/RANKL stimulation in bone marrow-derived macrophages, the interaction promotes the binding of PRDM1/BLIMP1 to the gene promoter of IRF8. In terms of processing, sumoylation at Lys-816 by PIAS1 augments transcriptional repressor activity, and is critical for plasma cell differentiation. Can be sumoylated with SUMO1 and SUMO2 by PML. Degradation of the wild-type protein mostly depends upon sumoylation, rather than ubiquitination. Desumoylated by SENP1 and SENP6. Ubiquitinated by the SCF(FBXO11) complex, leading to its degradation by the proteasome.

The protein localises to the nucleus. It localises to the cytoplasm. Transcription factor that mediates a transcriptional program in various innate and adaptive immune tissue-resident lymphocyte T cell types such as tissue-resident memory T (Trm), natural killer (trNK) and natural killer T (NKT) cells and negatively regulates gene expression of proteins that promote the egress of tissue-resident T-cell populations from non-lymphoid organs. Plays a role in the development, retention and long-term establishment of adaptive and innate tissue-resident lymphocyte T cell types in non-lymphoid organs, such as the skin and gut, but also in other nonbarrier tissues like liver and kidney, and therefore may provide immediate immunological protection against reactivating infections or viral reinfection. Binds specifically to the PRDI element in the promoter of the beta-interferon gene. Drives the maturation of B-lymphocytes into Ig secreting cells. Associates with the transcriptional repressor ZNF683 to chromatin at gene promoter regions. Binds to the promoter and acts as a transcriptional repressor of IRF8, thereby promotes transcription of osteoclast differentiation factors such as NFATC1 and EEIG1. The sequence is that of PR domain zinc finger protein 1 (PRDM1) from Homo sapiens (Human).